Reading from the N-terminus, the 299-residue chain is Nitrogenase iron protein (299 aa).

11-18 (GKGGIGKS) is a binding site for ATP. [4Fe-4S] cluster is bound at residue C99. R102 is subject to ADP-ribosylarginine; by dinitrogenase reductase ADP-ribosyltransferase. C133 contacts [4Fe-4S] cluster.

This sequence belongs to the NifH/BchL/ChlL family. In terms of assembly, homodimer. The cofactor is [4Fe-4S] cluster. In terms of processing, the reversible ADP-ribosylation of Arg-102 inactivates the nitrogenase reductase and regulates nitrogenase activity.

The enzyme catalyses N2 + 8 reduced [2Fe-2S]-[ferredoxin] + 16 ATP + 16 H2O = H2 + 8 oxidized [2Fe-2S]-[ferredoxin] + 2 NH4(+) + 16 ADP + 16 phosphate + 6 H(+). The key enzymatic reactions in nitrogen fixation are catalyzed by the nitrogenase complex, which has 2 components: the iron protein and the molybdenum-iron protein. The protein is Nitrogenase iron protein of Rhodopseudomonas palustris (strain BisB5).